The following is a 673-amino-acid chain: MACLLETPIRMSVLSEVTASSRHYVDRLFDPDPQKVLQGVIDMKNAVIGNNKQKANLIVLGAVPRLLYLLQQETSSTELKTECAVVLGSLAMGTENNVKSLLDCHIIPALLQGLLSPDLKFIEACLRCPRTIFTSPVTPEELLYTDATVIPHLMALLSRSRYTQEYICQIFSHCCKGPDHQTILFNHGAVQNIAHLLTSLSYKVRMQALKCFSVLAFENPQVSMTLVNVLVDGELLPQIFVKMLQRDKPIEMQLTSAKCLTYMCRAGAIRTDDNCIVLKTLPCLVRMCSKERLLEERVEGAETLAYLIEPDVELQRIASITDHLIAMLADYFKYPSSVSAITDIKRLDHDLKHAHELRQAAFKLYASLGANDEDIRKKIIETENMMDRIVTGLSESSVKVRLAAVRCLHSLSRSVQQLRTSFQDHAVWKPLMKVLQNAPDEILVVASSMLCNLLLEFSPSKEPILESGAVELLCGLTQSENPALRVNGIWALMNTAFQAEQKIKADILRSLSTEQLFRLLSDSDLNVLMKTLGLLRNLLSTRPHIDKIMSTHGKQIMQAVTLILEGEHNIEVKEQTLCILANIADGTTAKDLIMTNDDILQKIKYYMGHSHVKLQLAAMFCISNLIWNEEEGSQERQDKLRDMGIVDILHKLSQSPDSNLCDKAKMALQQYLA.

Position 2 is an N-acetylalanine (alanine 2). 14 ARM repeats span residues 51–92, 95–134, 138–176, 178–217, 224–265, 269–309, 313–352, 374–413, 416–455, 458–497, 501–540, 543–585, 588–627, and 634–673; these read NKQK…SLAM, ENNVKSLLDCHIIPALLQGLLSPDLKFIEACLRCPRTIFT, TPEELLYTDATVIPHLMALLSRSRYTQEYICQIFSHCCK, PDHQTILFNHGAVQNIAHLLTSLSYKVRMQALKCFSVLAF, MTLV…YMCR, IRTD…YLIE, ELQRIASITDHLIAMLADYFKYPSSVSAITDIKRLDHDLK, DIRKKIIETENMMDRIVTGLSESSVKVRLAAVRCLHSLSR, QQLRTSFQDHAVWKPLMKVLQNAPDEILVVASSMLCNLLL, SPSKEPILESGAVELLCGLTQSENPALRVNGIWALMNTAF, QKIKADILRSLSTEQLFRLLSDSDLNVLMKTLGLLRNLLS, PHID…NIAD, TAKDLIMTNDDILQKIKYYMGHSHVKLQLAAMFCISNLIW, and QERQDKLRDMGIVDILHKLSQSPDSNLCDKAKMALQQYLA. The residue at position 337 (serine 337) is a Phosphoserine. Serine 512 is subject to Phosphoserine.

In terms of assembly, identified in the CTLH complex that contains GID4, RANBP9 and/or RANBP10, MKLN1, MAEA, RMND5A (or alternatively its paralog RMND5B), GID8, ARMC8, WDR26 and YPEL5. Within this complex, MAEA, RMND5A (or alternatively its paralog RMND5B), GID8, WDR26, and RANBP9 and/or RANBP10 form the catalytic core, while GID4, MKLN1, ARMC8 and YPEL5 have ancillary roles.

It is found in the nucleus. It localises to the cytoplasm. Functionally, component of the CTLH E3 ubiquitin-protein ligase complex that selectively accepts ubiquitin from UBE2H and mediates ubiquitination and subsequent proteasomal degradation of the transcription factor HBP1. The chain is Armadillo repeat-containing protein 8 (ARMC8) from Pongo abelii (Sumatran orangutan).